Reading from the N-terminus, the 604-residue chain is Prostaglandin G/H synthase 2 (604 aa).

A signal peptide spans 1–17; it reads MLARALLLCAVLALSHT. Residues 18-55 form the EGF-like domain; that stretch reads ANPCCSHPCQNRGVCMSVGFDQYKCDCTRTGFYGENCS. Disulfide bonds link Cys21–Cys32, Cys22–Cys145, Cys26–Cys42, and Cys44–Cys54. Asn53 is a glycosylation site (N-linked (GlcNAc...) asparagine). Residue Arg106 participates in substrate binding. Asn130 carries an N-linked (GlcNAc...) asparagine glycan. His193 functions as the Proton acceptor in the catalytic mechanism. Residue Tyr341 participates in substrate binding. Tyr371 acts as the For cyclooxygenase activity in catalysis. His374 contacts heme b. N-linked (GlcNAc...) asparagine glycosylation occurs at Asn396. An S-nitrosocysteine modification is found at Cys526. Residues Cys555 and Cys561 are joined by a disulfide bond. Ser565 carries the O-acetylserine modification. Asn580 carries an N-linked (GlcNAc...) asparagine glycan.

This sequence belongs to the prostaglandin G/H synthase family. As to quaternary structure, homodimer. Requires heme b as cofactor. S-nitrosylation by NOS2 (iNOS) activates enzyme activity. S-nitrosylation may take place on different Cys residues in addition to Cys-526. In terms of processing, acetylated at Ser-565 by SPHK1. During neuroinflammation, acetylation by SPHK1 promotes neuronal secretion of specialized preresolving mediators (SPMs), especially 15-R-lipoxin A4, which results in an increase of phagocytic microglia.

It localises to the microsome membrane. It is found in the endoplasmic reticulum membrane. The protein localises to the nucleus inner membrane. Its subcellular location is the nucleus outer membrane. The catalysed reaction is (5Z,8Z,11Z,14Z)-eicosatetraenoate + AH2 + 2 O2 = prostaglandin H2 + A + H2O. It catalyses the reaction (5Z,8Z,11Z,14Z)-eicosatetraenoate + 2 O2 = prostaglandin G2. The enzyme catalyses prostaglandin G2 + AH2 = prostaglandin H2 + A + H2O. It carries out the reaction (5Z,8Z,11Z,14Z,17Z)-eicosapentaenoate + 2 O2 = prostaglandin G3. The catalysed reaction is prostaglandin G3 + AH2 = prostaglandin H3 + A + H2O. It catalyses the reaction (8Z,11Z,14Z)-eicosatrienoate + 2 O2 = prostaglandin G1. The enzyme catalyses prostaglandin G1 + AH2 = prostaglandin H1 + A + H2O. It carries out the reaction 2-(5Z,8Z,11Z,14Z)-eicosatetraenoyl-sn-glycero-3-phosphoethanolamine + 2 O2 = 2-(prostaglandin G2)-sn-glycero-3-phosphoethanolamine. The catalysed reaction is 2-(prostaglandin G2)-sn-glycero-3-phosphoethanolamine + AH2 = 2-(prostaglandin H2)-sn-glycero-3-phosphoethanolamine + A + H2O. It catalyses the reaction 2-(5Z,8Z,11Z,14Z)-eicosatetraenoyl-sn-glycero-3-phosphocholine + 2 O2 = 2-(prostaglandin G2)-sn-glycero-3-phosphocholine. The enzyme catalyses 2-(prostaglandin G2)-sn-glycero-3-phosphocholine + AH2 = 2-(prostaglandin H2)-sn-glycero-3-phosphocholine + A + H2O. It carries out the reaction (15S)-hydroperoxy-(5Z,8Z,11Z,13E)-eicosatetraenoate + AH2 = (15S)-hydroxy-(5Z,8Z,11Z,13E)-eicosatetraenoate + A + H2O. The catalysed reaction is 2-(5Z,8Z,11Z,14Z)-eicosatetraenoyl-sn-glycero-3-phosphocholine + AH2 + O2 = 2-[(15S)-hydroxy-(5Z,8Z,11Z,13E)-eicosatetraenoyl]-sn-glycero-3-phosphocholine + A + H2O. It catalyses the reaction 2-(5Z,8Z,11Z,14Z)-eicosatetraenoyl-sn-glycero-3-phosphocholine + AH2 + O2 = 2-[(15R)-hydroxy-(5Z,8Z,11Z,13E)-eicosatetraenoyl]-sn-glycero-3-phosphocholine + A + H2O. The enzyme catalyses 2-(5Z,8Z,11Z,14Z)-eicosatetraenoyl-sn-glycero-3-phosphocholine + AH2 + O2 = 2-[(11R)-hydroxy-(5Z,8Z,12E,14Z)-eicosatetraenoyl]-sn-glycero-3-phosphocholine + A + H2O. It carries out the reaction (9Z,12Z)-octadecadienoate + AH2 + O2 = 9-hydroxy-(10E,12Z)-octadecadienoate + A + H2O. The catalysed reaction is (9Z,12Z)-octadecadienoate + AH2 + O2 = 13-hydroxy-(9Z,11E)-octadecadienoate + A + H2O. It catalyses the reaction (5Z,8Z,11Z,14Z)-eicosatetraenoate + AH2 + O2 = (15R)-hydroxy-(5Z,8Z,11Z,13E)-eicosatetraenoate + A + H2O. The enzyme catalyses (5Z,8Z,11Z,14Z)-eicosatetraenoate + AH2 + O2 = (11R)-hydroxy-(5Z,8Z,12E,14Z)-eicosatetraenoate + A + H2O. It carries out the reaction (5Z,8Z,11Z,14Z,17Z)-eicosapentaenoate + AH2 + O2 = (11R)-hydroxy-(5Z,8Z,12E,14Z,17Z)-eicosapentaenoate + A + H2O. The catalysed reaction is (5Z,8Z,11Z,14Z,17Z)-eicosapentaenoate + AH2 + O2 = (18S)-hydroxy-(5Z,8Z,11Z,14Z,16E)-eicosapentaenoate + A + H2O. It catalyses the reaction (5Z,8Z,11Z,14Z,17Z)-eicosapentaenoate + AH2 + O2 = (18R)-hydroxy-(5Z,8Z,11Z,14Z,16E)-eicosapentaenoate + A + H2O. The enzyme catalyses (5Z,8Z,11Z,14Z,17Z)-eicosapentaenoate + AH2 + O2 = (15R)-hydroxy-(5Z,8Z,11Z,13E,17Z)-eicosapentaenoate + A + H2O. It carries out the reaction (5Z,8Z,11Z,14Z,17Z)-eicosapentaenoate + AH2 + O2 = (15S)-hydroxy-(5Z,8Z,11Z,13E,17Z)-eicosapentaenoate + A + H2O. The catalysed reaction is (7Z,10Z,13Z,16Z,19Z)-docosapentaenoate + AH2 + O2 = 13R-hydroxy-(7Z,10Z,14E,16Z,19Z)-docosapentaenoate + A + H2O. It catalyses the reaction (4Z,7Z,10Z,13Z,16Z,19Z)-docosahexaenoate + AH2 + O2 = 13-hydroxy-(4Z,7Z,10Z,14E,16Z,19Z)-docosahexaenoate + A + H2O. The enzyme catalyses (5S)-hydroxy-(6E,8Z,11Z,14Z)-eicosatetraenoate + AH2 + O2 = (5S,15R)-dihydroxy-(6E,8Z,11Z,13E)-eicosatetraenoate + A + H2O. It carries out the reaction (4Z,7Z,10Z,13Z,16Z,19Z)-docosahexaenoate + AH2 + O2 = 17R-hydroxy-(4Z,7Z,10Z,13Z,15E,19Z)-docosahexaenoate + A + H2O. The catalysed reaction is (5S)-hydroxy-(6E,8Z,11Z,14Z)-eicosatetraenoate + AH2 + O2 = (5S,15S)-dihydroxy-(6E,8Z,11Z,13E)-eicosatetraenoate + A + H2O. It catalyses the reaction (5S)-hydroxy-(6E,8Z,11Z,14Z)-eicosatetraenoate + AH2 + O2 = (5S,11R)-dihydroxy-(6E,8Z,12E,14Z)-eicosatetraenoate + A + H2O. The enzyme catalyses 2-(5Z,8Z,11Z,14Z-eicosatetraenoyl)-glycerol + 2 O2 = 2-glyceryl-prostaglandin G2. It carries out the reaction 2-glyceryl-prostaglandin G2 + AH2 = 2-glyceryl-prostaglandin H2 + A + H2O. The catalysed reaction is (5Z,8Z,11Z,14Z)-eicosatetraenoate + O2 = (15R)-hydroperoxy-(5Z,8Z,11Z,13E)-eicosatetraenoate. It catalyses the reaction (5Z,8Z,11Z,14Z)-eicosatetraenoate + O2 = 11R-hydroperoxy-(5Z,8Z,12E,14Z)-eicosatetraenoate. The enzyme catalyses (9Z,12Z)-octadecadienoate + AH2 + O2 = (9R)-hydroxy-(10E,12Z)-octadecadienoate + A + H2O. It carries out the reaction (9Z,12Z)-octadecadienoate + AH2 + O2 = (9S)-hydroxy-(10E,12Z)-octadecadienoate + A + H2O. The catalysed reaction is (9Z,12Z)-octadecadienoate + AH2 + O2 = (13S)-hydroxy-(9Z,11E)-octadecadienoate + A + H2O. It catalyses the reaction (9Z,12Z)-octadecadienoate + AH2 + O2 = (13R)-hydroxy-(9Z,11E)-octadecadienoate + A + H2O. The protein operates within lipid metabolism; prostaglandin biosynthesis. With respect to regulation, the cyclooxygenase activity is inhibited by nonsteroidal anti-inflammatory drugs (NSAIDs) including aspirin, ibuprofen, flurbiprofen, celecoxib, flufenamic, mefenamic and tolfenamic acids as well as by hydroperoxide scavenger erythrocyte glutathione peroxidase GPX1. Aspirin triggers enzyme acetylation turning off its ability to generate pro-inflammatory prostaglandins, but switches on its capacity to produce anti-inflammatory lipid mediators involved in inflammation resolution. Aspirin enhances lipoxygenase-type activity toward production of epimers with R stereochemistry such as 15R-HETE, 18R-HEPE, 15R-HEPE and 17R-HDHA. Atorvastatin, a cholesterol-lowering drug, triggers enzyme S-nitrosylation increasing production of 13-series resolvins (RvTs). In terms of biological role, dual cyclooxygenase and peroxidase in the biosynthesis pathway of prostanoids, a class of C20 oxylipins mainly derived from arachidonate ((5Z,8Z,11Z,14Z)-eicosatetraenoate, AA, C20:4(n-6)), with a particular role in the inflammatory response. The cyclooxygenase activity oxygenates AA to the hydroperoxy endoperoxide prostaglandin G2 (PGG2), and the peroxidase activity reduces PGG2 to the hydroxy endoperoxide prostaglandin H2 (PGH2), the precursor of all 2-series prostaglandins and thromboxanes. This complex transformation is initiated by abstraction of hydrogen at carbon 13 (with S-stereochemistry), followed by insertion of molecular O2 to form the endoperoxide bridge between carbon 9 and 11 that defines prostaglandins. The insertion of a second molecule of O2 (bis-oxygenase activity) yields a hydroperoxy group in PGG2 that is then reduced to PGH2 by two electrons. Similarly catalyzes successive cyclooxygenation and peroxidation of dihomo-gamma-linoleate (DGLA, C20:3(n-6)) and eicosapentaenoate (EPA, C20:5(n-3)) to corresponding PGH1 and PGH3, the precursors of 1- and 3-series prostaglandins. In an alternative pathway of prostanoid biosynthesis, converts 2-arachidonoyl lysophopholipids to prostanoid lysophopholipids, which are then hydrolyzed by intracellular phospholipases to release free prostanoids. Metabolizes 2-arachidonoyl glycerol yielding the glyceryl ester of PGH2, a process that can contribute to pain response. Generates lipid mediators from n-3 and n-6 polyunsaturated fatty acids (PUFAs) via a lipoxygenase-type mechanism. Oxygenates PUFAs to hydroperoxy compounds and then reduces them to corresponding alcohols. Plays a role in the generation of resolution phase interaction products (resolvins) during both sterile and infectious inflammation. Metabolizes docosahexaenoate (DHA, C22:6(n-3)) to 17R-HDHA, a precursor of the D-series resolvins (RvDs). As a component of the biosynthetic pathway of E-series resolvins (RvEs), converts eicosapentaenoate (EPA, C20:5(n-3)) primarily to 18S-HEPE that is further metabolized by ALOX5 and LTA4H to generate 18S-RvE1 and 18S-RvE2. In vascular endothelial cells, converts docosapentaenoate (DPA, C22:5(n-3)) to 13R-HDPA, a precursor for 13-series resolvins (RvTs) shown to activate macrophage phagocytosis during bacterial infection. In activated leukocytes, contributes to oxygenation of hydroxyeicosatetraenoates (HETE) to diHETES (5,15-diHETE and 5,11-diHETE). Can also use linoleate (LA, (9Z,12Z)-octadecadienoate, C18:2(n-6)) as substrate and produce hydroxyoctadecadienoates (HODEs) in a regio- and stereospecific manner, being (9R)-HODE ((9R)-hydroxy-(10E,12Z)-octadecadienoate) and (13S)-HODE ((13S)-hydroxy-(9Z,11E)-octadecadienoate) its major products. During neuroinflammation, plays a role in neuronal secretion of specialized preresolving mediators (SPMs) 15R-lipoxin A4 that regulates phagocytic microglia. The sequence is that of Prostaglandin G/H synthase 2 from Homo sapiens (Human).